A 2365-amino-acid polypeptide reads, in one-letter code: TRIO and F-actin-binding protein (2365 aa).

Disordered stretches follow at residues 48–1106 (VPYC…HEPL), 1168–1554 (HRDA…SERR), 1593–1667 (LPRK…WPKI), and 1679–1751 (AGLE…TSWR). A compositionally biased stretch (low complexity) spans 132–151 (SDPTSSPDSATPDDTSNSSS). Residue H221 is modified to Phosphothreonine. Polar residues-rich tracts occupy residues 239-271 (TLTQ…QAAS), 291-375 (RASS…TPQR), 403-422 (RTSC…SPNR), 429-471 (RTSC…SPNR), 478-520 (RTSC…SPNR), 527-569 (RTSC…SPNR), 576-618 (RTSC…SPNR), 625-650 (RTSC…SPRT), 661-674 (SSPN…NPRT), 683-701 (RASS…TSCA), 709-722 (SSPN…NPRT), 745-785 (RTSC…SPNR), and 807-837 (IRAT…PKTS). Positions 324-348 (STQEDTPRASSTQWNTPRASSPSRS) are essentiel for its aggregation. At Q457 the chain carries Phosphothreonine. Residues 839-854 (TKRDNLRPTCTQRDRT) are compositionally biased toward basic and acidic residues. 3 stretches are compositionally biased toward polar residues: residues 855 to 898 (QSFS…SSPH), 913 to 927 (PTQS…PSRS), and 945 to 994 (DRPQ…TSSP). Positions 1045 to 1056 (RAPESEPPHHEP) are enriched in basic and acidic residues. The segment covering 1195 to 1206 (SMESLAPSTDSL) has biased composition (polar residues). 2 stretches are compositionally biased toward basic and acidic residues: residues 1260–1270 (ETRHNLEREEY) and 1303–1319 (GRAE…RKSE). Positions 1332–1349 (SQQPSQGQSQLLRRQSSP) are enriched in low complexity. Basic and acidic residues-rich tracts occupy residues 1378 to 1387 (SPEKRPEGDR) and 1402 to 1411 (TPERELRTQR). Residues 1452 to 1461 (GGLGPGGWWG) show a composition bias toward gly residues. The segment covering 1494-1508 (WEEKPTHELPRELGK) has biased composition (basic and acidic residues). The segment covering 1524–1534 (ESSQSWHSGTP) has biased composition (polar residues). Positions 1594–1606 (PRKDPAGHRDDLA) are enriched in basic and acidic residues. The segment covering 1645–1664 (ALQSQSPVQLPSPACTSTQW) has biased composition (polar residues). The span at 1696–1705 (PSLPELQFQP) shows a compositional bias: low complexity. The segment covering 1724–1735 (KQADSADKRPAE) has biased composition (basic and acidic residues). Residues 1778–1887 (LNFKKGWMSI…WIEALRKTVR (110 aa)) enclose the PH domain. Residue S1796 is modified to Phosphoserine. 2 disordered regions span residues 1889-2017 (TSAP…LTED) and 2174-2194 (LSKT…HQSD). R1930 carries the omega-N-methylarginine modification. Phosphoserine occurs at positions 1949 and 1955. Residues 1965–1997 (TPDRLAKQEELERDLAQRSEERRKWFEATDSRT) are compositionally biased toward basic and acidic residues. 2 coiled-coil regions span residues 2062–2247 (SDGH…NQEL) and 2281–2361 (ELEV…SMRN).

As to quaternary structure, isoform 1 forms aggregates. Isoform 1 binds to TRIO and F-actin. Isoform 1 may also interact with myosin II. Interacts with HECTD3. Interacts with PJVK. Interacts with TERF1; mediates TERF1 localization to the centrosome. Ubiquitinated by HECTD3, leading to its degradation by the proteasome. In terms of processing, phosphorylation at Thr-457 by PLK1 ensures mitotic progression and is essential for accurate chromosome segregation. Phosphorylation at residues Thr-221 and Thr-457 by kinase NEK2A and PLK1 coordinates TERF1 translocation from telomere to spindle pole. Widely expressed. Highly expressed in heart and placenta. In terms of tissue distribution, expressed in fetal brain, retina and cochlea but is not detectable in the other tissues.

The protein localises to the nucleus. It is found in the cytoplasm. Its subcellular location is the cytoskeleton. The protein resides in the microtubule organizing center. It localises to the centrosome. The protein localises to the midbody. It is found in the chromosome. Its subcellular location is the telomere. Functionally, regulates actin cytoskeletal organization, cell spreading and cell contraction by directly binding and stabilizing filamentous F-actin and prevents its depolymerization. May also serve as a linker protein to recruit proteins required for F-actin formation and turnover. Essential for correct mitotic progression. Plays a pivotal role in the formation of stereocilia rootlets. The sequence is that of TRIO and F-actin-binding protein (TRIOBP) from Homo sapiens (Human).